The sequence spans 358 residues: MTPRTRADLETIPAYIPGKNFPGAIKLASNETTLGPLPSVRDAIADAAANANRYPDNGHVALIAALADHLGVATENIAAGCGSVSLCQELVQATCNDGDEVIFAWRSFEAYPVVTQVAGATPVKVPLTADHGHDLDAMLAAITDRTRLIFVCNPNNPTGTALTKAELERFLDAVPADVLVALDEAYFEYNRSDADGIELFRGRPNVVVLRTFSKAYGLAGIRVGYAVADPAVVTALTKVHIAFAVNAVAQAAAIASLAASGELLARTDGVVAERKRVRDALLAAGYEVPESAANFVYLPLGAHSGAFAAASAEAGVLLRPYGDDGVRITIGDPAENDAFLAFATSTEARSLANVAVRA.

Position 214 is an N6-(pyridoxal phosphate)lysine (Lys-214).

Belongs to the class-II pyridoxal-phosphate-dependent aminotransferase family. In terms of assembly, homodimer. Pyridoxal 5'-phosphate serves as cofactor.

It catalyses the reaction an aromatic L-alpha-amino acid + 2-oxoglutarate = an aromatic oxo-acid + L-glutamate. Functionally, aminotransferase that catalyzes the conversion of aromatic amino acids and 2-oxoglutarate into corresponding aromatic oxo acids and L-glutamate. This is Aromatic amino acid aminotransferase from Rhodococcus jostii (strain RHA1).